The sequence spans 475 residues: D(1B) dopamine receptor (475 aa).

The Extracellular portion of the chain corresponds to M1–Q38. An N-linked (GlcNAc...) asparagine glycan is attached at N7. Residues V39–V64 form a helical membrane-spanning segment. The Cytoplasmic segment spans residues R65 to N75. Residues I76–A102 traverse the membrane as a helical segment. Residues G103 to C111 are Extracellular-facing. C111 and C211 are oxidised to a cystine. Residues D112 to V134 form a helical membrane-spanning segment. The Cytoplasmic segment spans residues D135–R153. Residues V154–H179 traverse the membrane as a helical segment. The Extracellular portion of the chain corresponds to R180 to L215. The helical transmembrane segment at N216–T240 threads the bilayer. Residues R241–F289 are Cytoplasmic-facing. Residues K290–S317 form a helical membrane-spanning segment. The Extracellular portion of the chain corresponds to S318–T335. Residues F336 to N357 form a helical membrane-spanning segment. Residues A358–A475 lie on the Cytoplasmic side of the membrane. A lipid anchor (S-palmitoyl cysteine) is attached at C370. Residues S415 to D443 form a disordered region.

This sequence belongs to the G-protein coupled receptor 1 family. Brain, in the lateral mammillary nuclei, the anterior pretectal nuclei, and several layers of the hippocampus.

Its subcellular location is the cell membrane. Functionally, dopamine receptor whose activity is mediated by G proteins which activate adenylyl cyclase. The sequence is that of D(1B) dopamine receptor (Drd5) from Rattus norvegicus (Rat).